Consider the following 78-residue polypeptide: Small ribosomal subunit protein bS18 (78 aa).

The protein belongs to the bacterial ribosomal protein bS18 family. In terms of assembly, part of the 30S ribosomal subunit. Forms a tight heterodimer with protein bS6.

Its function is as follows. Binds as a heterodimer with protein bS6 to the central domain of the 16S rRNA, where it helps stabilize the platform of the 30S subunit. The protein is Small ribosomal subunit protein bS18 of Ligilactobacillus salivarius (strain UCC118) (Lactobacillus salivarius).